A 74-amino-acid polypeptide reads, in one-letter code: Large ribosomal subunit protein bL28 (74 aa).

It belongs to the bacterial ribosomal protein bL28 family.

The polypeptide is Large ribosomal subunit protein bL28 (Buchnera aphidicola subsp. Baizongia pistaciae (strain Bp)).